Reading from the N-terminus, the 407-residue chain is Methylthioribose kinase (407 aa).

ATP contacts are provided by residues Asn40, Lys57, and 111 to 113 (EDL). Substrate is bound at residue Asp229. Residue 246 to 248 (DAE) coordinates ATP. Arg344 serves as a coordination point for substrate.

This sequence belongs to the methylthioribose kinase family. In terms of assembly, homodimer.

The catalysed reaction is 5-(methylsulfanyl)-D-ribose + ATP = 5-(methylsulfanyl)-alpha-D-ribose 1-phosphate + ADP + H(+). It participates in amino-acid biosynthesis; L-methionine biosynthesis via salvage pathway; S-methyl-5-thio-alpha-D-ribose 1-phosphate from S-methyl-5'-thioadenosine (hydrolase route): step 2/2. Functionally, catalyzes the phosphorylation of methylthioribose into methylthioribose-1-phosphate. The sequence is that of Methylthioribose kinase from Yersinia pestis bv. Antiqua (strain Angola).